Reading from the N-terminus, the 580-residue chain is DNA ligase 1 (580 aa).

Position 245 (Glu245) interacts with ATP. Residue Lys247 is the N6-AMP-lysine intermediate of the active site. The ATP site is built by Arg252, Arg267, Glu297, Phe343, Arg420, and Lys426.

It belongs to the ATP-dependent DNA ligase family. Requires Mg(2+) as cofactor.

It carries out the reaction ATP + (deoxyribonucleotide)n-3'-hydroxyl + 5'-phospho-(deoxyribonucleotide)m = (deoxyribonucleotide)n+m + AMP + diphosphate.. DNA ligase that seals nicks in double-stranded DNA during DNA replication, DNA recombination and DNA repair. In Methanosarcina acetivorans (strain ATCC 35395 / DSM 2834 / JCM 12185 / C2A), this protein is DNA ligase 1.